The following is a 515-amino-acid chain: Sterol 14-alpha demethylase cyp51A (515 aa).

The chain crosses the membrane as a helical span at residues Leu7–Phe29. 2 N-linked (GlcNAc...) asparagine glycosylation sites follow: Asn33 and Asn269. Heme is bound at residue Cys454. N-linked (GlcNAc...) asparagine glycosylation occurs at Asn512.

This sequence belongs to the cytochrome P450 family. Heme is required as a cofactor.

The protein resides in the endoplasmic reticulum membrane. The catalysed reaction is a 14alpha-methyl steroid + 3 reduced [NADPH--hemoprotein reductase] + 3 O2 = a Delta(14) steroid + formate + 3 oxidized [NADPH--hemoprotein reductase] + 4 H2O + 4 H(+). The enzyme catalyses a 14alpha-methyl steroid + reduced [NADPH--hemoprotein reductase] + O2 = a 14alpha-hydroxymethyl steroid + oxidized [NADPH--hemoprotein reductase] + H2O + H(+). It catalyses the reaction a 14alpha-hydroxymethyl steroid + reduced [NADPH--hemoprotein reductase] + O2 = a 14alpha-formyl steroid + oxidized [NADPH--hemoprotein reductase] + 2 H2O + H(+). It carries out the reaction a 14alpha-formyl steroid + reduced [NADPH--hemoprotein reductase] + O2 = a Delta(14) steroid + formate + oxidized [NADPH--hemoprotein reductase] + H2O + 2 H(+). The catalysed reaction is lanosterol + 3 reduced [NADPH--hemoprotein reductase] + 3 O2 = 4,4-dimethyl-5alpha-cholesta-8,14,24-trien-3beta-ol + formate + 3 oxidized [NADPH--hemoprotein reductase] + 4 H2O + 4 H(+). The enzyme catalyses lanosterol + reduced [NADPH--hemoprotein reductase] + O2 = 32-hydroxylanosterol + oxidized [NADPH--hemoprotein reductase] + H2O + H(+). It catalyses the reaction 32-hydroxylanosterol + reduced [NADPH--hemoprotein reductase] + O2 = 32-oxolanosterol + oxidized [NADPH--hemoprotein reductase] + 2 H2O + H(+). It carries out the reaction 32-oxolanosterol + reduced [NADPH--hemoprotein reductase] + O2 = 4,4-dimethyl-5alpha-cholesta-8,14,24-trien-3beta-ol + formate + oxidized [NADPH--hemoprotein reductase] + H2O + 2 H(+). The catalysed reaction is eburicol + 3 reduced [NADPH--hemoprotein reductase] + 3 O2 = 14-demethyleburicol + formate + 3 oxidized [NADPH--hemoprotein reductase] + 4 H2O + 4 H(+). The enzyme catalyses eburicol + reduced [NADPH--hemoprotein reductase] + O2 = 32-hydroxyeburicol + oxidized [NADPH--hemoprotein reductase] + H2O + H(+). It catalyses the reaction 32-hydroxyeburicol + reduced [NADPH--hemoprotein reductase] + O2 = 32-oxoeburicol + oxidized [NADPH--hemoprotein reductase] + 2 H2O + H(+). It carries out the reaction 32-oxoeburicol + reduced [NADPH--hemoprotein reductase] + O2 = 14-demethyleburicol + formate + oxidized [NADPH--hemoprotein reductase] + H2O + 2 H(+). It participates in steroid metabolism; ergosterol biosynthesis. With respect to regulation, the sterol 14-alpha demethylase activity is inhibited by azole compounds. Activity is inhibited by the novel and long-acting fungicidal azole, PC1244. Sterol 14alpha-demethylase, encoded by cyp51A and cyp51B, that plays a critical role in the third module of ergosterol biosynthesis pathway, being ergosterol the major sterol component in fungal membranes that participates in a variety of functions. The third module or late pathway involves the ergosterol synthesis itself through consecutive reactions that mainly occur in the endoplasmic reticulum (ER) membrane. In filamentous fungi, during the initial step of this module, lanosterol (lanosta-8,24-dien-3beta-ol) can be metabolized to eburicol. Sterol 14alpha-demethylase catalyzes the three-step oxidative removal of the 14alpha-methyl group (C-32) of both these sterols in the form of formate, and converts eburicol and lanosterol to 14-demethyleburicol (4,4,24-trimethylergosta-8,14,24(28)-trienol) and 4,4-dimethyl-5alpha-cholesta-8,14,24-trien-3beta-ol, respectively, which are further metabolized by other enzymes in the pathway to ergosterol. Can also use substrates not intrinsic to fungi, such as 24,25-dihydrolanosterol (DHL), producing 4,4'-dimethyl-8,14-cholestadien-3-beta-ol, but at lower rates than the endogenous substrates. In terms of biological role, as a target of azole drugs, plays a crucial role in azole susceptibility. The polypeptide is Sterol 14-alpha demethylase cyp51A (Aspergillus fumigatus (strain ATCC MYA-4609 / CBS 101355 / FGSC A1100 / Af293) (Neosartorya fumigata)).